We begin with the raw amino-acid sequence, 78 residues long: Large ribosomal subunit protein bL28 (78 aa).

A compositionally biased stretch (polar residues) spans methionine 1 to histidine 20. Residues methionine 1 to isoleucine 23 are disordered.

The protein belongs to the bacterial ribosomal protein bL28 family.

The polypeptide is Large ribosomal subunit protein bL28 (Prochlorococcus marinus (strain NATL2A)).